The primary structure comprises 42 residues: Lebocin-like anionic peptide 1 (42 aa).

Hemolymph.

The protein localises to the secreted. Antimicrobial protein. Has antibacterial activity against the Gram-positive bacteria M.luteus (MIC=22.7 uM) and L.monocytogenes (MIC=90.9 uM). Lacks antibacterial activity against the Gram-positive bacteria B.circulans, S.aureus, and S.lutea, and the Gram-negative bacteria E.coli D31, E.coli ATCC 25922, and S.typhimurium. Has antifungal activity against A.niger (MIC=90.9 uM) and T.harzianum (MIC=90.9 uM), but lacks antifungal activity against S.cerevisiae, P.pastoris, Z.marxianus, C.albicans, C.fructus, and F.oxysporum. The polypeptide is Lebocin-like anionic peptide 1 (Galleria mellonella (Greater wax moth)).